Consider the following 588-residue polypeptide: Proteasome-associated ATPase (588 aa).

Positions 1-10 are enriched in basic and acidic residues; sequence MAAHDDDINR. A disordered region spans residues 1 to 22; sequence MAAHDDDINRGTRPARGSEDPA. Positions 47–94 form a coiled coil; the sequence is RILEERIVELQTNLAGVSAQNERLANTLREARDQIVALKEEVDRLAQP. ATP is bound at residue 276–281; it reads GCGKTL. The segment at 587 to 588 is docks into pockets in the proteasome alpha-ring; sequence YL.

Belongs to the AAA ATPase family. In terms of assembly, homohexamer. Assembles into a hexameric ring structure that caps the 20S proteasome core. Strongly interacts with the prokaryotic ubiquitin-like protein Pup through a hydrophobic interface; the interacting region of ARC lies in its N-terminal coiled-coil domain. There is one Pup binding site per ARC hexamer ring. Upon ATP-binding, the C-terminus of ARC interacts with the alpha-rings of the proteasome core, possibly by binding to the intersubunit pockets.

It functions in the pathway protein degradation; proteasomal Pup-dependent pathway. Functionally, ATPase which is responsible for recognizing, binding, unfolding and translocation of pupylated proteins into the bacterial 20S proteasome core particle. May be essential for opening the gate of the 20S proteasome via an interaction with its C-terminus, thereby allowing substrate entry and access to the site of proteolysis. Thus, the C-termini of the proteasomal ATPase may function like a 'key in a lock' to induce gate opening and therefore regulate proteolysis. This chain is Proteasome-associated ATPase, found in Streptomyces griseus subsp. griseus (strain JCM 4626 / CBS 651.72 / NBRC 13350 / KCC S-0626 / ISP 5235).